Here is an 87-residue protein sequence, read N- to C-terminus: Translation initiation factor IF-1 2 (87 aa).

One can recognise an S1-like domain in the interval 1 to 72 (MAKEELIELN…TKGRINFRHK (72 aa)). The segment at 66 to 87 (RINFRHKDERSGPPSRPPQHRR) is disordered.

Belongs to the IF-1 family. In terms of assembly, component of the 30S ribosomal translation pre-initiation complex which assembles on the 30S ribosome in the order IF-2 and IF-3, IF-1 and N-formylmethionyl-tRNA(fMet); mRNA recruitment can occur at any time during PIC assembly.

The protein resides in the cytoplasm. Its function is as follows. One of the essential components for the initiation of protein synthesis. Stabilizes the binding of IF-2 and IF-3 on the 30S subunit to which N-formylmethionyl-tRNA(fMet) subsequently binds. Helps modulate mRNA selection, yielding the 30S pre-initiation complex (PIC). Upon addition of the 50S ribosomal subunit IF-1, IF-2 and IF-3 are released leaving the mature 70S translation initiation complex. The sequence is that of Translation initiation factor IF-1 2 from Bordetella parapertussis (strain 12822 / ATCC BAA-587 / NCTC 13253).